Here is a 132-residue protein sequence, read N- to C-terminus: Small ribosomal subunit protein uS8 (132 aa).

The protein belongs to the universal ribosomal protein uS8 family. As to quaternary structure, part of the 30S ribosomal subunit. Contacts proteins S5 and S12.

One of the primary rRNA binding proteins, it binds directly to 16S rRNA central domain where it helps coordinate assembly of the platform of the 30S subunit. This is Small ribosomal subunit protein uS8 from Lysinibacillus sphaericus (strain C3-41).